Consider the following 187-residue polypeptide: uncharacterized protein (187 aa).

It belongs to the isochorismatase family.

This is an uncharacterized protein from Bacillus subtilis (strain 168).